The following is a 395-amino-acid chain: Phosphopentomutase (395 aa).

Residues aspartate 14, aspartate 286, histidine 291, aspartate 327, histidine 328, and histidine 339 each contribute to the Mn(2+) site.

Belongs to the phosphopentomutase family. It depends on Mn(2+) as a cofactor.

The protein localises to the cytoplasm. It carries out the reaction 2-deoxy-alpha-D-ribose 1-phosphate = 2-deoxy-D-ribose 5-phosphate. It catalyses the reaction alpha-D-ribose 1-phosphate = D-ribose 5-phosphate. Its pathway is carbohydrate degradation; 2-deoxy-D-ribose 1-phosphate degradation; D-glyceraldehyde 3-phosphate and acetaldehyde from 2-deoxy-alpha-D-ribose 1-phosphate: step 1/2. In terms of biological role, isomerase that catalyzes the conversion of deoxy-ribose 1-phosphate (dRib-1-P) and ribose 1-phosphate (Rib-1-P) to deoxy-ribose 5-phosphate (dRib-5-P) and ribose 5-phosphate (Rib-5-P), respectively. This chain is Phosphopentomutase, found in Staphylococcus haemolyticus (strain JCSC1435).